The following is a 431-amino-acid chain: STE20-related kinase adapter protein alpha (431 aa).

Phosphoserine is present on residues S2 and S46. Disordered regions lie at residues 32-52 (EQPP…SIAS) and 314-344 (PSRS…SHPY). Residues 69 to 379 (YELLTIIGKG…ASTLLNHSFF (311 aa)) enclose the Protein kinase domain. T419 carries the phosphothreonine; by LKB1 modification.

Belongs to the protein kinase superfamily. STE Ser/Thr protein kinase family. STE20 subfamily. In terms of assembly, component of a trimeric complex composed of STK11/LKB1, STRAD (STRADA or STRADB) and CAB39/MO25 (CAB39/MO25alpha or CAB39L/MO25beta): the complex tethers STK11/LKB1 in the cytoplasm and stimulates its catalytic activity.

The protein localises to the nucleus. It is found in the cytoplasm. Functionally, pseudokinase which, in complex with CAB39/MO25 (CAB39/MO25alpha or CAB39L/MO25beta), binds to and activates STK11/LKB1. Adopts a closed conformation typical of active protein kinases and binds STK11/LKB1 as a pseudosubstrate, promoting conformational change of STK11/LKB1 in an active conformation. This chain is STE20-related kinase adapter protein alpha (Strada), found in Mus musculus (Mouse).